The sequence spans 146 residues: Hemoglobin subunit beta (146 aa).

Positions 2-146 (HWSAEEKQLI…VAHALARKYH (145 aa)) constitute a Globin domain. Heme b-binding residues include H63 and H92.

The protein belongs to the globin family. In terms of assembly, heterotetramer of two alpha chains and two beta chains. In terms of tissue distribution, red blood cells.

Involved in oxygen transport from the lung to the various peripheral tissues. The chain is Hemoglobin subunit beta (HBB) from Phoenicopterus ruber (American flamingo).